Here is a 361-residue protein sequence, read N- to C-terminus: Ribosomal RNA large subunit methyltransferase M (361 aa).

S-adenosyl-L-methionine contacts are provided by residues serine 187, 220–223, aspartate 239, aspartate 259, and aspartate 276; that span reads CPGG. Lysine 305 functions as the Proton acceptor in the catalytic mechanism.

It belongs to the class I-like SAM-binding methyltransferase superfamily. RNA methyltransferase RlmE family. RlmM subfamily. In terms of assembly, monomer.

Its subcellular location is the cytoplasm. The enzyme catalyses cytidine(2498) in 23S rRNA + S-adenosyl-L-methionine = 2'-O-methylcytidine(2498) in 23S rRNA + S-adenosyl-L-homocysteine + H(+). Its function is as follows. Catalyzes the 2'-O-methylation at nucleotide C2498 in 23S rRNA. In Shewanella baltica (strain OS223), this protein is Ribosomal RNA large subunit methyltransferase M.